The chain runs to 336 residues: Holliday junction branch migration complex subunit RuvB (336 aa).

Positions A4–Y184 are large ATPase domain (RuvB-L). ATP contacts are provided by residues I23, R24, G65, K68, T69, T70, E131–Y133, R174, Y184, and R221. Mg(2+) is bound at residue T69. The small ATPAse domain (RuvB-S) stretch occupies residues Q185–N255. Positions A258 to P336 are head domain (RuvB-H). The DNA site is built by R294, R313, and R318.

The protein belongs to the RuvB family. Homohexamer. Forms an RuvA(8)-RuvB(12)-Holliday junction (HJ) complex. HJ DNA is sandwiched between 2 RuvA tetramers; dsDNA enters through RuvA and exits via RuvB. An RuvB hexamer assembles on each DNA strand where it exits the tetramer. Each RuvB hexamer is contacted by two RuvA subunits (via domain III) on 2 adjacent RuvB subunits; this complex drives branch migration. In the full resolvosome a probable DNA-RuvA(4)-RuvB(12)-RuvC(2) complex forms which resolves the HJ.

It localises to the cytoplasm. It carries out the reaction ATP + H2O = ADP + phosphate + H(+). The RuvA-RuvB-RuvC complex processes Holliday junction (HJ) DNA during genetic recombination and DNA repair, while the RuvA-RuvB complex plays an important role in the rescue of blocked DNA replication forks via replication fork reversal (RFR). RuvA specifically binds to HJ cruciform DNA, conferring on it an open structure. The RuvB hexamer acts as an ATP-dependent pump, pulling dsDNA into and through the RuvAB complex. RuvB forms 2 homohexamers on either side of HJ DNA bound by 1 or 2 RuvA tetramers; 4 subunits per hexamer contact DNA at a time. Coordinated motions by a converter formed by DNA-disengaged RuvB subunits stimulates ATP hydrolysis and nucleotide exchange. Immobilization of the converter enables RuvB to convert the ATP-contained energy into a lever motion, pulling 2 nucleotides of DNA out of the RuvA tetramer per ATP hydrolyzed, thus driving DNA branch migration. The RuvB motors rotate together with the DNA substrate, which together with the progressing nucleotide cycle form the mechanistic basis for DNA recombination by continuous HJ branch migration. Branch migration allows RuvC to scan DNA until it finds its consensus sequence, where it cleaves and resolves cruciform DNA. The protein is Holliday junction branch migration complex subunit RuvB of Enterobacter sp. (strain 638).